Here is a 306-residue protein sequence, read N- to C-terminus: Glutathione transport system permease protein GsiC (306 aa).

Topologically, residues Met-1–Arg-8 are cytoplasmic. The helical transmembrane segment at Leu-9–Leu-29 threads the bilayer. Topologically, residues Leu-30–Thr-102 are periplasmic. Residues Phe-95–Val-292 form the ABC transmembrane type-1 domain. A helical membrane pass occupies residues Ile-103–Trp-123. Residues Arg-124–Thr-134 are Cytoplasmic-facing. The helical transmembrane segment at Leu-135 to Phe-155 threads the bilayer. Topologically, residues Ser-156 to Asp-168 are periplasmic. The chain crosses the membrane as a helical span at residues Ser-169–Ala-189. Over Arg-190 to Met-228 the chain is Cytoplasmic. The helical transmembrane segment at Ile-229–Val-249 threads the bilayer. At Glu-250–Val-278 the chain is on the periplasmic side. The helical transmembrane segment at Leu-279–Ile-299 threads the bilayer. Over Asn-300–Lys-306 the chain is Cytoplasmic.

Belongs to the binding-protein-dependent transport system permease family. As to quaternary structure, the complex is composed of two ATP-binding proteins (GsiA), two transmembrane proteins (GsiC and GsiD) and a solute-binding protein (GsiB).

It localises to the cell inner membrane. Its function is as follows. Part of the ABC transporter complex GsiABCD involved in glutathione import. Probably responsible for the translocation of the substrate across the membrane. This Salmonella paratyphi A (strain ATCC 9150 / SARB42) protein is Glutathione transport system permease protein GsiC.